Here is a 221-residue protein sequence, read N- to C-terminus: Probable chemoreceptor glutamine deamidase CheD 1 (221 aa).

The protein belongs to the CheD family.

The catalysed reaction is L-glutaminyl-[protein] + H2O = L-glutamyl-[protein] + NH4(+). In terms of biological role, probably deamidates glutamine residues to glutamate on methyl-accepting chemotaxis receptors (MCPs), playing an important role in chemotaxis. This chain is Probable chemoreceptor glutamine deamidase CheD 1, found in Methanosarcina mazei (strain ATCC BAA-159 / DSM 3647 / Goe1 / Go1 / JCM 11833 / OCM 88) (Methanosarcina frisia).